Here is a 139-residue protein sequence, read N- to C-terminus: Transcription antitermination protein NusB (139 aa).

This sequence belongs to the NusB family.

Functionally, involved in transcription antitermination. Required for transcription of ribosomal RNA (rRNA) genes. Binds specifically to the boxA antiterminator sequence of the ribosomal RNA (rrn) operons. This Erwinia tasmaniensis (strain DSM 17950 / CFBP 7177 / CIP 109463 / NCPPB 4357 / Et1/99) protein is Transcription antitermination protein NusB.